The chain runs to 64 residues: Large ribosomal subunit protein bL35 (64 aa).

The span at 1-42 (MPKAKTHSGASKRFRRTGTGKIVRQKANRRHLLEHKPTKRTR) shows a compositional bias: basic residues. The interval 1 to 64 (MPKAKTHSGA…NSRINKLLNG (64 aa)) is disordered. Polar residues predominate over residues 48 to 58 (TTVSAADNSRI).

The protein belongs to the bacterial ribosomal protein bL35 family.

This is Large ribosomal subunit protein bL35 from Mycolicibacterium smegmatis (strain ATCC 700084 / mc(2)155) (Mycobacterium smegmatis).